We begin with the raw amino-acid sequence, 463 residues long: MDEGDEDLISGRGFTEGARKAGPKPVGVLAVVGRPNVGKSSLVNRILGRRAAVVEDTPGVTRDRVSYDAEWAGTDFKLVDTGGWEADVEGIESAIASQAQVAVTLADAVVFVVDGQVGMTTTDERIVKMLRAAGKPVVLAVNKIDDQASEYLAAEFWKLGLGEPYSISAMHGRGVGDLLDVALDKLKQAEKTSGYLTPSGLRRVALVGRPNVGKSSLLNQLAREERAVVNDLAGTTRDPVDEIVNIDGEDWLFIDTAGIKRRQHKLTGAEYYSSLRTQAAIERCELALILFDASQPVSDQDLKVMSTAVDAGRAIVLVFNKWDAMDEFDKQRLERLWNTEFDRVMWAERVNLSAKTGWHTNRLTRAMDKALESWDQRIPTGKLNAFLGKIQAAHPHPLRGGKQPRILFATQASTRPPRFVIFATGFLEHGYRRYIERSLREEFGFEGTPIQISVNIREKKKRK.

Positions 1–20 (MDEGDEDLISGRGFTEGARK) are disordered. 2 consecutive EngA-type G domains span residues 27–190 (GVLA…KQAE) and 202–375 (RRVA…ESWD). Residues 33–40 (GRPNVGKS), 80–84 (DTGGW), 142–145 (NKID), 208–215 (GRPNVGKS), 255–259 (DTAGI), and 320–323 (NKWD) contribute to the GTP site. Residues 376–458 (QRIPTGKLNA…PIQISVNIRE (83 aa)) enclose the KH-like domain.

It belongs to the TRAFAC class TrmE-Era-EngA-EngB-Septin-like GTPase superfamily. EngA (Der) GTPase family. As to quaternary structure, associates with the 50S ribosomal subunit.

Its function is as follows. GTPase that plays an essential role in the late steps of ribosome biogenesis. The polypeptide is GTPase Der (Bifidobacterium longum (strain NCC 2705)).